The chain runs to 721 residues: Homeobox-leucine zipper protein HDG2 (721 aa).

The segment at 17 to 70 is disordered; sequence NNHNYNHEDNNNEGFLRDDEFDSPNTKSGSENQEGGSGNDQDPLHPNKKKRYHR. Over residues 21-34 the composition is skewed to basic and acidic residues; the sequence is YNHEDNNNEGFLRD. The segment at residues 64 to 123 is a DNA-binding region (homeobox); sequence KKKRYHRHTQLQIQEMEAFFKECPHPDDKQRKQLSRELNLEPLQVKFWFQNKRTQMKNHH. Residues 120 to 194 adopt a coiled-coil conformation; sequence KNHHERHENS…DRISAIAAKY (75 aa). Residues 242–468 enclose the START domain; the sequence is TESDKPVIID…LDRQCERLAS (227 aa).

The protein belongs to the HD-ZIP homeobox family. Class IV subfamily. Interacts with AIL7/PLT7, ANT, BBM and AIL1. As to expression, expressed in hairless cell files of the hypocotyl epidermis. Expressed in shoot apical meristem (SAM) with higher levels in L1 cells and the epidermal layer of young leaves. Expressed in primary root tips, in the L1 of apical inflorescence meristems, early flower primordia, carpel epidermis, ovule primordia, nucellus, chalaze and seed coat.

It is found in the nucleus. Its function is as follows. Probable transcription factor. Involved, together with PDF2, in the regulation of flower organs development by promoting the expression of APETALA 3 (AP3) in the epidermis and internal cell layers of developing flowers. This Arabidopsis thaliana (Mouse-ear cress) protein is Homeobox-leucine zipper protein HDG2.